The primary structure comprises 605 residues: Solute carrier family 23 member 1 (605 aa).

The tract at residues 1–30 (MKTPEDPGSPKQHEVVDSAGTSTRDRQAPL) is disordered. The Cytoplasmic segment spans residues 1 to 59 (MKTPEDPGSPKQHEVVDSAGTSTRDRQAPLPTEPKFDMLYKIEDVPPWYLCILLGFQHY). The helical transmembrane segment at 60-80 (LTCFSGTIAVPFLLAEALCVG) threads the bilayer. Over 81–88 (RDQHMVSQ) the chain is Extracellular. The chain crosses the membrane as a helical span at residues 89–109 (LIGTIFTCVGITTLIQTTVGI). A topological domain (cytoplasmic) is located at residue Arg110. The helical transmembrane segment at 111 to 131 (LPLFQASAFAFLVPAKSILAL) threads the bilayer. The Extracellular portion of the chain corresponds to 132-166 (ERWKCPSEEEIYGNWSMPLNTSHIWHPRIREVQGA). Residues Asn145 and Asn151 are each glycosylated (N-linked (GlcNAc...) asparagine). Residues 167-187 (IMVSSMVEVVIGLMGLPGALL) traverse the membrane as a helical segment. The Cytoplasmic portion of the chain corresponds to 188-214 (SYIGPLTVTPTVSLIGLSVFQAAGDRA). A helical transmembrane segment spans residues 215-232 (GSHWGISACSILLIVLFS). Residues 233-236 (QYLR) lie on the Extracellular side of the membrane. Residues 237–250 (NLTFLLPVYRWGKG) constitute an intramembrane region (helical). At 251-257 (LTLFRVQ) the chain is on the extracellular side. A helical transmembrane segment spans residues 258-278 (IFKMFPIVLAIMTVWLLCYVL). Residues 279-319 (TLTDVLPADPTVYGFQARTDARGDIMAISPWIRIPYPCQWG) lie on the Cytoplasmic side of the membrane. The chain crosses the membrane as a helical span at residues 320-340 (LPTVTVAAVLGMFSATLAGII). Residues 341 to 365 (ESIGDYYACARLAGAPPPPVHAINR) are Extracellular-facing. A helical membrane pass occupies residues 366–386 (GIFTEGICCIIAGLLGTGNGS). At 387–409 (TSSSPNIGVLGITKVGSRRVVQY) the chain is on the cytoplasmic side. A helical membrane pass occupies residues 410–430 (GAGIMLILGAIGKFTALFASL). The Extracellular segment spans residues 431–433 (PDP). Residues 434–454 (ILGGMFCTLFGMITAVGLSNL) form a helical membrane-spanning segment. The Cytoplasmic portion of the chain corresponds to 455-464 (QFVDMNSSRN). A helical membrane pass occupies residues 465–485 (LFVLGFSMFFGLTLPNYLDSN). At 486–497 (PGAINTGIPEVD) the chain is on the extracellular side. Residues 498–518 (QILTVLLTTEMFVGGCLAFIL) form a helical membrane-spanning segment. At 519 to 605 (DNTVPGSPEE…IETGSVCTKV (87 aa)) the chain is on the cytoplasmic side. Thr598 carries the phosphothreonine modification. Phosphoserine is present on Ser600. Thr603 carries the post-translational modification Phosphothreonine.

This sequence belongs to the nucleobase:cation symporter-2 (NCS2) (TC 2.A.40) family. Phosphorylated. In terms of tissue distribution, expressed in kidney (at protein level).

Its subcellular location is the cell membrane. It catalyses the reaction L-ascorbate(out) + 2 Na(+)(out) = L-ascorbate(in) + 2 Na(+)(in). It carries out the reaction urate(out) + 2 Na(+)(out) = urate(in) + 2 Na(+)(in). Sodium:L-ascorbate cotransporter. Mediates electrogenic uptake of vitamin C, with a stoichiometry of 2 Na(+) for each L-ascorbate. Has retained some ancestral activity toward nucleobases such as urate, an oxidized purine. Low-affinity high-capacity sodium:urate cotransporter, may regulate serum urate levels by serving as a renal urate re-absorber. This chain is Solute carrier family 23 member 1 (Slc23a1), found in Mus musculus (Mouse).